The following is a 136-amino-acid chain: MNSQIKTKAVYWGTGRRKTSVARVRLIPGNGLITINGRSGDDYLNFNPLHLNSVKAPLQTLGLENSYDILVNVFGGGLTGQADAIKQGAARALCELSPDNRKPLKTEGHLSRDPRAKERRKYGLKKARKAPQFSKR.

Residues 97 to 136 (SPDNRKPLKTEGHLSRDPRAKERRKYGLKKARKAPQFSKR) form a disordered region. The segment covering 98–116 (PDNRKPLKTEGHLSRDPRA) has biased composition (basic and acidic residues). Residues 117–136 (KERRKYGLKKARKAPQFSKR) show a composition bias toward basic residues.

This sequence belongs to the universal ribosomal protein uS9 family.

The protein is Small ribosomal subunit protein uS9 of Prochlorococcus marinus (strain MIT 9215).